We begin with the raw amino-acid sequence, 152 residues long: Ribonuclease pancreatic gamma-type (152 aa).

Positions 1 to 25 are cleaved as a signal peptide; sequence MGLEKSLFLFSLLVLVLGWVQPSLG. Lys35 and Arg38 together coordinate substrate. His40 functions as the Proton acceptor in the catalytic mechanism. 4 disulfide bridges follow: Cys54/Cys112, Cys68/Cys123, Cys86/Cys138, and Cys93/Cys100. Substrate is bound by residues 69-73, Lys94, and Arg113; that span reads KSMNT. His147 serves as the catalytic Proton donor.

The protein belongs to the pancreatic ribonuclease family. Monomer.

It localises to the secreted. The enzyme catalyses an [RNA] containing cytidine + H2O = an [RNA]-3'-cytidine-3'-phosphate + a 5'-hydroxy-ribonucleotide-3'-[RNA].. It carries out the reaction an [RNA] containing uridine + H2O = an [RNA]-3'-uridine-3'-phosphate + a 5'-hydroxy-ribonucleotide-3'-[RNA].. Its function is as follows. Endonuclease that catalyzes the cleavage of RNA on the 3' side of pyrimidine nucleotides. Acts on single-stranded and double-stranded RNA. The protein is Ribonuclease pancreatic gamma-type of Rattus norvegicus (Rat).